Consider the following 81-residue polypeptide: Trefoil factor 1 (81 aa).

Positions 1–21 (MEHKVTCVLAMVLMLALSSLA) are cleaved as a signal peptide. Pyrrolidone carboxylic acid is present on glutamine 22. Residues 26-69 (ETCAVIPRERINCGFPGVTAQQCKEKGCCFDDSVRGFPWCFRPL) enclose the P-type domain. Cystine bridges form between cysteine 28/cysteine 54, cysteine 38/cysteine 53, and cysteine 48/cysteine 65.

Its subcellular location is the secreted. In terms of biological role, stabilizer of the mucous gel overlying the gastrointestinal mucosa that provides a physical barrier against various noxious agents. The polypeptide is Trefoil factor 1 (Tff1) (Rattus norvegicus (Rat)).